We begin with the raw amino-acid sequence, 301 residues long: Protein phosphatase 1 regulatory subunit 3B (301 aa).

Residues 79 to 82 carry the PP1-binding motif motif; the sequence is RVSF. One can recognise a CBM21 domain in the interval 142–250; that stretch reads RNRLQAESVC…SNKGLNYRIV (109 aa).

In terms of assembly, interacts with glycogen, PPP1CC catalytic subunit of PP1 and PYGL. Associates with glycogen particles. Forms complexes with debranching enzyme, glycogen phosphorylase, glycogen synthase and phosphorylase kinase which is necessary for its regulation of PP1 activity.

Its function is as follows. Acts as a glycogen-targeting subunit for phosphatase PP1. Facilitates interaction of the PP1 with enzymes of the glycogen metabolism and regulates its activity. Suppresses the rate at which PP1 dephosphorylates (inactivates) glycogen phosphorylase and enhances the rate at which it activates glycogen synthase and therefore limits glycogen breakdown. This Xenopus tropicalis (Western clawed frog) protein is Protein phosphatase 1 regulatory subunit 3B (ppp1r3b).